Reading from the N-terminus, the 479-residue chain is Anaerobic nitric oxide reductase flavorubredoxin (479 aa).

The segment at 30–210 (LRGSSYNSYL…PFSRLVTPKI (181 aa)) is zinc metallo-hydrolase. Fe cation contacts are provided by H79, E81, D83, H147, D166, and H227. The Flavodoxin-like domain occupies 254 to 393 (ITIFYDTMSN…LCREHGREIA (140 aa)). FMN contacts are provided by residues 260–264 (TMSNN) and 342–369 (AFGSHGWSGGAVDRLSTRLQDAGFEMSL). In terms of domain architecture, Rubredoxin-like spans 423 to 479 (GPRMQCSVCQWIYDPAKGEPMQDVAPGTPWSEVPDNFLCPECSLGKDVFEELASEAK). 4 residues coordinate Fe cation: C428, C431, C461, and C464.

In the N-terminal section; belongs to the zinc metallo-hydrolase group 3 family. As to quaternary structure, homotetramer. Fe cation serves as cofactor. FMN is required as a cofactor.

The protein localises to the cytoplasm. Its pathway is nitrogen metabolism; nitric oxide reduction. Anaerobic nitric oxide reductase; uses NADH to detoxify nitric oxide (NO), protecting several 4Fe-4S NO-sensitive enzymes. Has at least 2 reductase partners, only one of which (NorW, flavorubredoxin reductase) has been identified. NO probably binds to the di-iron center; electrons enter from the reductase at rubredoxin and are transferred sequentially to the FMN center and the di-iron center. Also able to function as an aerobic oxygen reductase. The polypeptide is Anaerobic nitric oxide reductase flavorubredoxin (norV) (Escherichia coli (strain K12 / DH10B)).